We begin with the raw amino-acid sequence, 217 residues long: Adenylate kinase (217 aa).

An ATP-binding site is contributed by 10–15 (GAGKGT). Residues 30 to 59 (STGDLFRANISQQTELGKLAKSYMNAGNLV) form an NMP region. AMP contacts are provided by residues threonine 31, arginine 36, 57 to 59 (NLV), 85 to 88 (GFPR), and glutamine 92. The tract at residues 126-164 (GRRVCRNEPKHVFHVTYTPPKKEGVCDVCGGELYQRDDD) is LID. Residues arginine 127 and 137–138 (VF) contribute to the ATP site. AMP is bound by residues arginine 161 and arginine 172. Position 200 (glycine 200) interacts with ATP.

It belongs to the adenylate kinase family. As to quaternary structure, monomer.

Its subcellular location is the cytoplasm. It catalyses the reaction AMP + ATP = 2 ADP. The protein operates within purine metabolism; AMP biosynthesis via salvage pathway; AMP from ADP: step 1/1. Its function is as follows. Catalyzes the reversible transfer of the terminal phosphate group between ATP and AMP. Plays an important role in cellular energy homeostasis and in adenine nucleotide metabolism. The polypeptide is Adenylate kinase (Streptomyces coelicolor (strain ATCC BAA-471 / A3(2) / M145)).